The sequence spans 336 residues: RHOMBOID-like protein 12, mitochondrial (336 aa).

A mitochondrion-targeting transit peptide spans 1 to 85 (MKAIFNRRVV…RGFFASALGN (85 aa)). The next 6 membrane-spanning stretches (helical) occupy residues 135–155 (VVLGLVIANAGVFVMWRVFNQ), 185–205 (IDIGHIVSNMIGLYFFGTSIA), 216–236 (LYLAGALGGSVFYLIHHAYMA), 254–274 (PGLGASGAVNAIMLLDIFLHP), 276–296 (ATLYLEFFIPVPAMLLGIFLI), and 307–327 (NSNISGSAHLGGAAVAAIAWA). Ser-259 (nucleophile) is an active-site residue. The active-site Charge relay system is the His-315.

This sequence belongs to the peptidase S54 family.

The protein localises to the mitochondrion membrane. Functionally, probable rhomboid-type serine protease that catalyzes intramembrane proteolysis. Unable to cleave either of the yeast Pcp1 substrates in yeast cells. The chain is RHOMBOID-like protein 12, mitochondrial from Arabidopsis thaliana (Mouse-ear cress).